Consider the following 232-residue polypeptide: Large ribosomal subunit protein uL1 (232 aa).

The protein belongs to the universal ribosomal protein uL1 family. As to quaternary structure, part of the 50S ribosomal subunit.

In terms of biological role, binds directly to 23S rRNA. The L1 stalk is quite mobile in the ribosome, and is involved in E site tRNA release. Functionally, protein L1 is also a translational repressor protein, it controls the translation of the L11 operon by binding to its mRNA. The polypeptide is Large ribosomal subunit protein uL1 (Cereibacter sphaeroides (strain ATCC 17025 / ATH 2.4.3) (Rhodobacter sphaeroides)).